The sequence spans 315 residues: Calumenin (315 aa).

A signal peptide spans 1-19 (MDLRQFLMCLSLCTAFALS). A Phosphoserine modification is found at serine 44. A Phosphotyrosine modification is found at tyrosine 47. Threonine 65 bears the Phosphothreonine mark. EF-hand domains lie at 68–103 (ESKE…AQKR), 104–139 (WIYE…YVLD), 151–186 (QMMV…EEYD), 188–223 (MKDI…HDGN), 229–264 (WVKT…SDYD), and 265–300 (HAEA…FVGS). Phosphoserine is present on serine 69. Aspartate 81, aspartate 83, aspartate 85, glutamate 92, aspartate 117, asparagine 119, aspartate 121, and glutamate 128 together coordinate Ca(2+). A glycan (N-linked (GlcNAc...) asparagine) is linked at asparagine 131. Residue aspartate 164 coordinates Ca(2+). Lysine 165 carries the N6-acetyllysine modification. Residues aspartate 166, aspartate 168, glutamate 175, aspartate 201, asparagine 203, aspartate 205, glutamate 212, aspartate 242, asparagine 244, aspartate 246, lysine 248, and glutamate 253 each contribute to the Ca(2+) site. Position 254 is a phosphothreonine (threonine 254). A phosphoserine mark is found at serine 261 and serine 277. Ca(2+) contacts are provided by aspartate 278, asparagine 280, aspartate 282, lysine 284, and glutamate 289. The short motif at 312 to 315 (HDEF) is the Prevents secretion from ER element.

It belongs to the CREC family. As to quaternary structure, interacts with GGCX.

It localises to the endoplasmic reticulum membrane. The protein localises to the golgi apparatus. Its subcellular location is the secreted. The protein resides in the melanosome. It is found in the sarcoplasmic reticulum lumen. Involved in regulation of vitamin K-dependent carboxylation of multiple N-terminal glutamate residues. Seems to inhibit gamma-carboxylase GGCX. Binds 7 calcium ions with a low affinity. This chain is Calumenin (CALU), found in Pongo abelii (Sumatran orangutan).